The chain runs to 877 residues: G-protein coupled receptor family C group 6 member A (877 aa).

A signal peptide spans 1–24 (MAGLDLSLVLMLSVLAGVREVSLT). Residues 25-567 (QVNQQGVIAP…EYFEWNSGFA (543 aa)) are Extracellular-facing. Residues asparagine 53, asparagine 99, asparagine 135, asparagine 263, asparagine 310, asparagine 322, asparagine 338, and asparagine 358 are each glycosylated (N-linked (GlcNAc...) asparagine). L-lysine is bound at residue aspartate 388. N-linked (GlcNAc...) asparagine glycosylation is found at asparagine 430, asparagine 475, asparagine 484, asparagine 528, and asparagine 548. A helical transmembrane segment spans residues 568 to 588 (IALLTLAALGILLLISMSALF). The Cytoplasmic segment spans residues 589–603 (FWQRNSLVVKAAGGP). A helical membrane pass occupies residues 604-624 (LCHLILFSLLGSFISVIFFVG). Residues 625–635 (EPSNESCRVRQ) lie on the Extracellular side of the membrane. Asparagine 628 carries N-linked (GlcNAc...) asparagine glycosylation. A helical membrane pass occupies residues 636-656 (VIFGLSFTLCVSCILVKSLKI). Topologically, residues 657–676 (LLAFQMNLELKELLRKLYKP) are cytoplasmic. A helical transmembrane segment spans residues 677–697 (YVIVCMCMGLQVTICTLWLTL). At 698 to 720 (HRPFIEKVVQPKSILLECNEGSD) the chain is on the extracellular side. Residues 721-741 (LMFGLMLGYIVLLALICFTFA) form a helical membrane-spanning segment. The Cytoplasmic portion of the chain corresponds to 742-755 (YKGRKLPQKYNEAK). A helical transmembrane segment spans residues 756–776 (FITFGMLIYLMAWVIFIPVHV). Residues 777 to 782 (TTSGKY) lie on the Extracellular side of the membrane. Residues 783–803 (VPAVEVVVILISNYGILSCHF) form a helical membrane-spanning segment. Over 804–877 (LPKCYIIIFK…VSVPEIDNVL (74 aa)) the chain is Cytoplasmic.

This sequence belongs to the G-protein coupled receptor 3 family. Homodimer; disulfide-linked. In terms of tissue distribution, expressed in olfactory epithelium. Also expressed in gills, tongue, lips and palatal organ. Not expressed in brain, kidney, liver, muscle, intestine, ovary and skin. In olfactory epithelium, it is widely expressed over the apical and medial portions of the olfactory sensory neurons, regions that contain olfactory neurons. Expressed in external epithelia, which contains taste buds and solitary chemosensory cells. On gill rakers, it is widely expressed in the surface epithelium, but excluded from taste buds.

The protein resides in the cell membrane. Olfactory receptor that is activated by amino acids that act as potent odorants in fish. Most highly activated by basic amino acids such as L-lysine and L-arginine. This chain is G-protein coupled receptor family C group 6 member A (gprc6a), found in Carassius auratus (Goldfish).